The sequence spans 334 residues: Aspartate carbamoyltransferase catalytic subunit (334 aa).

2 residues coordinate carbamoyl phosphate: arginine 71 and threonine 72. Lysine 99 is a binding site for L-aspartate. Residues arginine 121, histidine 151, and glutamine 154 each coordinate carbamoyl phosphate. Positions 184 and 239 each coordinate L-aspartate. Residues glycine 280 and proline 281 each contribute to the carbamoyl phosphate site.

It belongs to the aspartate/ornithine carbamoyltransferase superfamily. ATCase family. As to quaternary structure, heterododecamer (2C3:3R2) of six catalytic PyrB chains organized as two trimers (C3), and six regulatory PyrI chains organized as three dimers (R2).

The enzyme catalyses carbamoyl phosphate + L-aspartate = N-carbamoyl-L-aspartate + phosphate + H(+). It participates in pyrimidine metabolism; UMP biosynthesis via de novo pathway; (S)-dihydroorotate from bicarbonate: step 2/3. Catalyzes the condensation of carbamoyl phosphate and aspartate to form carbamoyl aspartate and inorganic phosphate, the committed step in the de novo pyrimidine nucleotide biosynthesis pathway. The chain is Aspartate carbamoyltransferase catalytic subunit from Pseudomonas entomophila (strain L48).